Consider the following 404-residue polypeptide: CCA-adding enzyme (404 aa).

ATP is bound by residues G27 and R30. CTP contacts are provided by G27 and R30. Mg(2+) is bound by residues D40 and D42. R111, D154, R157, R160, and R163 together coordinate ATP. CTP contacts are provided by R111, D154, R157, R160, and R163.

Belongs to the tRNA nucleotidyltransferase/poly(A) polymerase family. Bacterial CCA-adding enzyme type 3 subfamily. Homodimer. The cofactor is Mg(2+).

The catalysed reaction is a tRNA precursor + 2 CTP + ATP = a tRNA with a 3' CCA end + 3 diphosphate. The enzyme catalyses a tRNA with a 3' CCA end + 2 CTP + ATP = a tRNA with a 3' CCACCA end + 3 diphosphate. Its function is as follows. Catalyzes the addition and repair of the essential 3'-terminal CCA sequence in tRNAs without using a nucleic acid template. Adds these three nucleotides in the order of C, C, and A to the tRNA nucleotide-73, using CTP and ATP as substrates and producing inorganic pyrophosphate. tRNA 3'-terminal CCA addition is required both for tRNA processing and repair. Also involved in tRNA surveillance by mediating tandem CCA addition to generate a CCACCA at the 3' terminus of unstable tRNAs. While stable tRNAs receive only 3'-terminal CCA, unstable tRNAs are marked with CCACCA and rapidly degraded. The polypeptide is CCA-adding enzyme (Geobacillus sp. (strain WCH70)).